The primary structure comprises 129 residues: UPF0325 protein YPTS_3127 (129 aa).

This sequence belongs to the UPF0325 family.

This is UPF0325 protein YPTS_3127 from Yersinia pseudotuberculosis serotype IB (strain PB1/+).